We begin with the raw amino-acid sequence, 100 residues long: Urease subunit gamma (100 aa).

It belongs to the urease gamma subunit family. As to quaternary structure, heterotrimer of UreA (gamma), UreB (beta) and UreC (alpha) subunits. Three heterotrimers associate to form the active enzyme.

It is found in the cytoplasm. It catalyses the reaction urea + 2 H2O + H(+) = hydrogencarbonate + 2 NH4(+). It functions in the pathway nitrogen metabolism; urea degradation; CO(2) and NH(3) from urea (urease route): step 1/1. The chain is Urease subunit gamma from Synechococcus sp. (strain WH7805).